Here is a 252-residue protein sequence, read N- to C-terminus: Chitooligosaccharide deacetylase (252 aa).

Mg(2+) contacts are provided by His-61 and His-125.

It belongs to the YdjC deacetylase family. ChbG subfamily. In terms of assembly, homodimer. Requires Mg(2+) as cofactor.

It is found in the cytoplasm. It carries out the reaction N,N'-diacetylchitobiose + H2O = N-acetyl-beta-D-glucosaminyl-(1-&gt;4)-D-glucosamine + acetate. The enzyme catalyses diacetylchitobiose-6'-phosphate + H2O = N'-monoacetylchitobiose-6'-phosphate + acetate. Its pathway is glycan degradation; chitin degradation. In terms of biological role, involved in the degradation of chitin. ChbG is essential for growth on the acetylated chitooligosaccharides chitobiose and chitotriose but is dispensable for growth on cellobiose and chitosan dimer, the deacetylated form of chitobiose. Deacetylation of chitobiose-6-P and chitotriose-6-P is necessary for both the activation of the chb promoter by the regulatory protein ChbR and the hydrolysis of phosphorylated beta-glucosides by the phospho-beta-glucosidase ChbF. Catalyzes the removal of only one acetyl group from chitobiose-6-P to yield monoacetylchitobiose-6-P, the inducer of ChbR and the substrate of ChbF. This Salmonella dublin (strain CT_02021853) protein is Chitooligosaccharide deacetylase.